Reading from the N-terminus, the 450-residue chain is Keratin, type I cytoskeletal 25 (450 aa).

Positions 1–25 (MSLRLPSGSRRASPRPTTGSLRLSS) are disordered. The head stretch occupies residues 1 to 78 (MSLRLPSGSR…VNEGGLLSGN (78 aa)). Residues 79–114 (EKVTMQNLNDRLASYLENVRALEEANADLEQKIKGW) are coil 1A. The 316-residue stretch at 79–394 (EKVTMQNLND…LLIGGDDGAC (316 aa)) folds into the IF rod domain. The linker 1 stretch occupies residues 115–136 (YEKFGPGSCRGLDHDYSRYFPI). Residues 137 to 228 (IEDLKNQIIA…KNHKEEMQVL (92 aa)) form a coil 1B region. A linker 12 region spans residues 229–251 (QCAAGGNVNVEMNAAPGVDLTVL). The coil 2 stretch occupies residues 252–390 (LNNMRAEYEA…ETYCLLIGGD (139 aa)). Residues 391 to 450 (DGACKSGGYKSKDYGAGNVGNQMKDPVKAIVVKKVLEEVDQRSKILTPRLHSLEEKSQSN) are tail. S442 carries the phosphoserine modification.

The protein belongs to the intermediate filament family. In terms of assembly, heterodimer of a type I and a type II keratin. Heterodimer with type II keratin KRT5 leading to the formation of keratin intermediate filament (KIF) network. Interacts with KRT6A to form filaments.

It is found in the cytoplasm. Its function is as follows. Essential for the proper assembly of type I and type II keratin protein complexes and formation of keratin intermediate filaments in the inner root sheath (irs). Plays a role in the cytoskeleton organization. The chain is Keratin, type I cytoskeletal 25 from Bos taurus (Bovine).